The following is a 544-amino-acid chain: Chaperonin GroEL (544 aa).

ATP contacts are provided by residues 30–33, lysine 51, 87–91, glycine 415, and aspartate 495; these read TLGP and DGTTT.

The protein belongs to the chaperonin (HSP60) family. In terms of assembly, forms a cylinder of 14 subunits composed of two heptameric rings stacked back-to-back. Interacts with the co-chaperonin GroES.

It is found in the cytoplasm. It carries out the reaction ATP + H2O + a folded polypeptide = ADP + phosphate + an unfolded polypeptide.. Together with its co-chaperonin GroES, plays an essential role in assisting protein folding. The GroEL-GroES system forms a nano-cage that allows encapsulation of the non-native substrate proteins and provides a physical environment optimized to promote and accelerate protein folding. This Aeromonas salmonicida protein is Chaperonin GroEL.